Reading from the N-terminus, the 392-residue chain is Cyclic di-GMP phosphodiesterase RocR (392 aa).

The Response regulatory domain occupies 5–126 (NVLVLEDEPF…RITALLTRYN (122 aa)). 4-aspartylphosphate is present on Asp-56. The EAL domain occupies 140–392 (ELPSVADVVR…QHFLDYCSGS (253 aa)). Mg(2+) contacts are provided by Glu-175, Asn-233, Glu-265, and Asp-295. The Proton acceptor role is filled by Glu-352.

Homotetramer. Exhibits a highly unusual tetrameric structure arranged around a single dyad, with the four subunits adopting two distinctly different conformations, with only two active sites accessible for substrate binding. Interacts with RocS1. The cofactor is Mg(2+).

The enzyme catalyses 3',3'-c-di-GMP + H2O = 5'-phosphoguanylyl(3'-&gt;5')guanosine + H(+). Phosphorylation of Asp-56 probably induces local conformational changes in the response regulatory domain. These structural changes are transmitted to the adjacent EAL domain, then the signal is further transmitted down to the active site. The phosphodiesterase activity is inhibited by Ca(2+) and Zn(2+). Phosphodiesterase activity is inhibited by a benzoisothiazolinone derivative that specifically inhibited RocR, but not some other phosphodiesterases. Phosphodiesterase (PDE) that catalyzes the hydrolysis of cyclic diguanylate (c-di-GMP) to 5'-pGpG. Cannot use cyclic AMP or cyclic GMP. Part of the RocSAR two-component regulatory signaling system (also known as the SadARS system), which regulates biofilm maturation, type III secretion and expression of the cup fimbrial-gene cluster. Negatively regulates the expression of cup genes by antagonizing the activity of RocA1. The sequence is that of Cyclic di-GMP phosphodiesterase RocR from Pseudomonas aeruginosa (strain ATCC 15692 / DSM 22644 / CIP 104116 / JCM 14847 / LMG 12228 / 1C / PRS 101 / PAO1).